The sequence spans 449 residues: 1H-pyrrole-2-carbonyl-[peptidyl-carrier protein] chlorinase (449 aa).

A16, E35, R41, H43, V44, S47, R123, I147, and D316 together coordinate FAD. Residues S327 and G328 each coordinate chloride. FAD is bound at residue V329.

The protein belongs to the flavin-dependent halogenase family. In terms of assembly, homodimer.

The catalysed reaction is (1H-pyrrole-2-carbonyl)-[peptidyl-carrier protein] + 2 FADH2 + 2 chloride + 2 O2 = (4,5-dichloro-1H-pyrrole-2-carbonyl)-[peptidyl-carrier protein] + 2 FAD + 4 H2O. It catalyses the reaction (1H-pyrrole-2-carbonyl)-[peptidyl-carrier protein] + FADH2 + chloride + O2 = (5-chloro-1H-pyrrole-2-carbonyl)-[peptidyl-carrier protein] + FAD + 2 H2O. The enzyme catalyses (5-chloro-1H-pyrrole-2-carbonyl)-[peptidyl-carrier protein] + FADH2 + chloride + O2 = (4,5-dichloro-1H-pyrrole-2-carbonyl)-[peptidyl-carrier protein] + FAD + 2 H2O. It functions in the pathway antibiotic biosynthesis. Its function is as follows. Involved in the biosynthesis of the antibiotic pyoluteorin. Catalyzes the dichlorination of the pyrrole ring of pyrrolyl-S-PltL, generating the 5-chloropyrrolyl-S-PltL intermediate and then the 4,5-dichloropyrrolyl-S-PltL product. The chain is 1H-pyrrole-2-carbonyl-[peptidyl-carrier protein] chlorinase from Pseudomonas fluorescens (strain ATCC BAA-477 / NRRL B-23932 / Pf-5).